The following is a 431-amino-acid chain: Glutamate-1-semialdehyde 2,1-aminomutase (431 aa).

Position 267 is an N6-(pyridoxal phosphate)lysine (Lys-267).

The protein belongs to the class-III pyridoxal-phosphate-dependent aminotransferase family. HemL subfamily. As to quaternary structure, homodimer. It depends on pyridoxal 5'-phosphate as a cofactor.

The protein resides in the cytoplasm. The catalysed reaction is (S)-4-amino-5-oxopentanoate = 5-aminolevulinate. It functions in the pathway porphyrin-containing compound metabolism; protoporphyrin-IX biosynthesis; 5-aminolevulinate from L-glutamyl-tRNA(Glu): step 2/2. The polypeptide is Glutamate-1-semialdehyde 2,1-aminomutase (Syntrophomonas wolfei subsp. wolfei (strain DSM 2245B / Goettingen)).